The following is a 550-amino-acid chain: Copine-F (550 aa).

C2 domains follow at residues 1-115 and 123-246; these read MAET…RLIG and ITGK…PIIN. The VWFA domain maps to 296-521; sequence DLMVAIDCTE…DFQNEILRKL (226 aa).

This sequence belongs to the copine family.

The polypeptide is Copine-F (cpnF) (Dictyostelium discoideum (Social amoeba)).